We begin with the raw amino-acid sequence, 327 residues long: Protein CONSERVED IN THE GREEN LINEAGE AND DIATOMS 27, chloroplastic (327 aa).

The N-terminal 59 residues, 1 to 59 (MLRLIVNYPLIPKISHRVCSNSSSKLGSYYDSSSIIKYGGISDVVGKKQELFLSVSVKA), are a transit peptide targeting the chloroplast. Residues 66-88 (NGGGSMSFSGQSWDPSSEIEVPS) are disordered. Transmembrane regions (helical) follow at residues 119 to 139 (LGGL…AASF), 148 to 168 (FILA…LRIY), and 225 to 245 (LIGT…ATPV).

As to expression, mostly expressed in seeds, leaves and flowers, and, to a lower extent, in roots.

It localises to the membrane. Its subcellular location is the plastid. The protein localises to the chloroplast. Functionally, required for growth in low iron conditions. This chain is Protein CONSERVED IN THE GREEN LINEAGE AND DIATOMS 27, chloroplastic, found in Arabidopsis thaliana (Mouse-ear cress).